Here is a 215-residue protein sequence, read N- to C-terminus: Ribosomal RNA small subunit methyltransferase G (215 aa).

S-adenosyl-L-methionine-binding positions include Gly78, Leu83, 128-129 (AE), and Arg146.

It belongs to the methyltransferase superfamily. RNA methyltransferase RsmG family.

Its subcellular location is the cytoplasm. It carries out the reaction guanosine(527) in 16S rRNA + S-adenosyl-L-methionine = N(7)-methylguanosine(527) in 16S rRNA + S-adenosyl-L-homocysteine. Its function is as follows. Specifically methylates the N7 position of guanine in position 527 of 16S rRNA. The sequence is that of Ribosomal RNA small subunit methyltransferase G from Anaeromyxobacter sp. (strain Fw109-5).